Reading from the N-terminus, the 502-residue chain is MTVLWFVSLILLISILLVAVKHSKRRWVRQPPSPPGLPIIGNLHQLGELPHQSLCKLSKKYGPVMLLKLGRVPTVIVSTPETAKQVLKDYDLHCCSRPSLEGTRKLSYNYLDIAFSRFDDYWKELRKLCVEELFCNKRINSIQPIKEAEMEKLIDSIAESASQKTLVNLSDTFLSLNVNVICKAVFGVNFQGTVLNNDKFQDLVHEALEMLGSFSASDFFPYVGWIVDWFTGLHARRERSVRDLDAFYEQMIDLHLQKNREESEDDFVDLLLRLEKEEAVLGYGKLTRNHIKAILMNILLGGINTSAITMTWAMAELIRNPRVMKKVQSEIRAQIGKNNKTRIISLDEINHLSYLNMVIKETCRLHPVAPLLVPREVISEFKINGYTIQPKTRLHVNVWAIGRDPEIWKDPEEFLPERFMDCDIDVKGQDYELLPFGSGRRICPAVYMGITTVEFGLANLLYHFDWKLPEGVAVEDIYMDEASGLTSHKKHDLLLVPVKSLV.

The helical transmembrane segment at Met1–Lys21 threads the bilayer. Position 443 (Cys443) interacts with heme.

The protein belongs to the cytochrome P450 family. It depends on heme as a cofactor.

It localises to the membrane. The chain is Cytochrome P450 71B10 (CYP71B10) from Arabidopsis thaliana (Mouse-ear cress).